Reading from the N-terminus, the 434-residue chain is Serine hydroxymethyltransferase (434 aa).

Residues Leu-133 and 137–139 (GHL) contribute to the (6S)-5,6,7,8-tetrahydrofolate site. At Lys-242 the chain carries N6-(pyridoxal phosphate)lysine.

This sequence belongs to the SHMT family. Homodimer. Requires pyridoxal 5'-phosphate as cofactor.

It localises to the cytoplasm. It catalyses the reaction (6R)-5,10-methylene-5,6,7,8-tetrahydrofolate + glycine + H2O = (6S)-5,6,7,8-tetrahydrofolate + L-serine. It participates in one-carbon metabolism; tetrahydrofolate interconversion. The protein operates within amino-acid biosynthesis; glycine biosynthesis; glycine from L-serine: step 1/1. In terms of biological role, catalyzes the reversible interconversion of serine and glycine with tetrahydrofolate (THF) serving as the one-carbon carrier. This reaction serves as the major source of one-carbon groups required for the biosynthesis of purines, thymidylate, methionine, and other important biomolecules. Also exhibits THF-independent aldolase activity toward beta-hydroxyamino acids, producing glycine and aldehydes, via a retro-aldol mechanism. The protein is Serine hydroxymethyltransferase of Methylorubrum extorquens (strain CM4 / NCIMB 13688) (Methylobacterium extorquens).